An 815-amino-acid polypeptide reads, in one-letter code: Leucine--tRNA ligase (815 aa).

The 'HIGH' region signature appears at 42-52; it reads PYPSGRLHMGH. The 'KMSKS' region signature appears at 571 to 575; the sequence is KMSKS. K574 is a binding site for ATP.

Belongs to the class-I aminoacyl-tRNA synthetase family.

It localises to the cytoplasm. The enzyme catalyses tRNA(Leu) + L-leucine + ATP = L-leucyl-tRNA(Leu) + AMP + diphosphate. The sequence is that of Leucine--tRNA ligase from Vesicomyosocius okutanii subsp. Calyptogena okutanii (strain HA).